The following is a 567-amino-acid chain: Myo-inositol transporter 1 (567 aa).

The Cytoplasmic portion of the chain corresponds to 1-88 (MSARPAQPNI…KFVWMLVSAA (88 aa)). A disordered region spans residues 14–42 (IRTSLSGYPSPTHSGSSTPASLEFSDGRL). Residues 16 to 33 (TSLSGYPSPTHSGSSTPA) are compositionally biased toward polar residues. The helical transmembrane segment at 89–109 (AISGLLFGYDTAAISGMLVII) threads the bilayer. Topologically, residues 110 to 123 (KDDLGTILSSWQKE) are extracellular. The helical transmembrane segment at 124–144 (VITSATTLGALLGGLAAGCVS) threads the bilayer. Over 145–150 (DFTGRR) the chain is Cytoplasmic. The chain crosses the membrane as a helical span at residues 151-171 (LVIVFANVAFIGGSICQAACH). The Extracellular segment spans residues 172–180 (TVAAMIAGR). A helical transmembrane segment spans residues 181-201 (FIVGLGVGLASCIVPLYIGEL). Residues 202–209 (APTMIRGR) are Cytoplasmic-facing. The chain crosses the membrane as a helical span at residues 210-230 (LVTINCVAVTLGQVVAYAIGA). Residues 231 to 240 (SFQNVHNGWR) lie on the Extracellular side of the membrane. Residues 241–261 (WIVGLGAMPSFVQLAAIGFLP) traverse the membrane as a helical segment. The Cytoplasmic segment spans residues 262–343 (ESPRILLLRS…IGCGLQAAQQ (82 aa)). Residues 344 to 364 (LCGFNTLMYYSATIFAMLGFN) traverse the membrane as a helical segment. Asn-365 is a glycosylation site (N-linked (GlcNAc...) asparagine). At 365-367 (NAT) the chain is on the extracellular side. Residues 368-388 (AVGLIVATVNVLFTLVALKIV) traverse the membrane as a helical segment. Residues 389 to 397 (DPVGRRRTM) lie on the Cytoplasmic side of the membrane. Residues 398-418 (LFTLPIMILALVFAAIFFYYL) form a helical membrane-spanning segment. At 419–435 (TLSTNGILIEDHDYPRS) the chain is on the extracellular side. The chain crosses the membrane as a helical span at residues 436–456 (LSILVLLSMLLYVAGYATGLG). At 457–476 (NIPWQQGELFRLEVRGIGTS) the chain is on the cytoplasmic side. Residues 477-497 (ICTAVNWSCNMLIAGTFLSLM) form a helical membrane-spanning segment. Residues 498-503 (DAATPS) lie on the Extracellular side of the membrane. A helical transmembrane segment spans residues 504-524 (GAFGIYAGFCVIGWVFCWMLY). Over 525-567 (PETSGLSLEEVYFVFEEGFGIKKSQQLRKQKLVEAAKLKAIFE) the chain is Cytoplasmic.

The protein belongs to the major facilitator superfamily. Sugar transporter (TC 2.A.1.1) family.

The protein resides in the cell membrane. It carries out the reaction myo-inositol(out) + H(+)(out) = myo-inositol(in) + H(+)(in). Functionally, may function as a transporter or as a sensor for myo-inositol. This chain is Myo-inositol transporter 1, found in Cryptococcus neoformans var. grubii serotype A (strain H99 / ATCC 208821 / CBS 10515 / FGSC 9487) (Filobasidiella neoformans var. grubii).